A 537-amino-acid chain; its full sequence is Phosphoenolpyruvate carboxykinase (ATP) (537 aa).

The substrate site is built by Arg-61, Tyr-195, and Lys-201. ATP is bound by residues Lys-201, His-220, and 236 to 244 (GLSGTGKTT). Residues Lys-201 and His-220 each coordinate Mn(2+). Asp-257 provides a ligand contact to Mn(2+). ATP is bound by residues Glu-285, Arg-323, and Thr-448. Arg-323 contributes to the substrate binding site.

The protein belongs to the phosphoenolpyruvate carboxykinase (ATP) family. Mn(2+) serves as cofactor.

The protein localises to the cytoplasm. The enzyme catalyses oxaloacetate + ATP = phosphoenolpyruvate + ADP + CO2. It functions in the pathway carbohydrate biosynthesis; gluconeogenesis. Its function is as follows. Involved in the gluconeogenesis. Catalyzes the conversion of oxaloacetate (OAA) to phosphoenolpyruvate (PEP) through direct phosphoryl transfer between the nucleoside triphosphate and OAA. The protein is Phosphoenolpyruvate carboxykinase (ATP) of Rhodopseudomonas palustris (strain ATCC BAA-98 / CGA009).